The chain runs to 283 residues: Pyridoxine/pyridoxal/pyridoxamine kinase (283 aa).

Substrate contacts are provided by Ser23 and His59. Asp125 is a binding site for ATP. Tyr136 serves as a coordination point for Mg(2+). ATP is bound by residues Thr157, Glu162, Thr195, 222-225 (HAHV), and Thr232. Glu162 is a Mg(2+) binding site. Asp234 provides a ligand contact to substrate.

It belongs to the pyridoxine kinase family. PdxK subfamily. In terms of assembly, homodimer. Mg(2+) is required as a cofactor.

The catalysed reaction is pyridoxal + ATP = pyridoxal 5'-phosphate + ADP + H(+). The enzyme catalyses pyridoxine + ATP = pyridoxine 5'-phosphate + ADP + H(+). It carries out the reaction pyridoxamine + ATP = pyridoxamine 5'-phosphate + ADP + H(+). Its pathway is cofactor metabolism; pyridoxal 5'-phosphate salvage; pyridoxal 5'-phosphate from pyridoxal: step 1/1. It functions in the pathway cofactor metabolism; pyridoxal 5'-phosphate salvage; pyridoxine 5'-phosphate from pyridoxine: step 1/1. It participates in cofactor metabolism; pyridoxal 5'-phosphate salvage; pyridoxamine 5'-phosphate from pyridoxamine: step 1/1. B6-vitamer kinase involved in the salvage pathway of pyridoxal 5'-phosphate (PLP). Catalyzes the phosphorylation of pyridoxine (PN), pyridoxal (PL), and pyridoxamine (PM), forming their respective 5'-phosphorylated esters, i.e. PNP, PLP and PMP. This chain is Pyridoxine/pyridoxal/pyridoxamine kinase, found in Bordetella bronchiseptica (strain ATCC BAA-588 / NCTC 13252 / RB50) (Alcaligenes bronchisepticus).